The following is a 201-amino-acid chain: FMN-dependent NADH:quinone oxidoreductase (201 aa).

FMN is bound by residues Ser9 and 16–18 (SYS).

This sequence belongs to the azoreductase type 1 family. In terms of assembly, homodimer. The cofactor is FMN.

It catalyses the reaction 2 a quinone + NADH + H(+) = 2 a 1,4-benzosemiquinone + NAD(+). The enzyme catalyses N,N-dimethyl-1,4-phenylenediamine + anthranilate + 2 NAD(+) = 2-(4-dimethylaminophenyl)diazenylbenzoate + 2 NADH + 2 H(+). Functionally, quinone reductase that provides resistance to thiol-specific stress caused by electrophilic quinones. In terms of biological role, also exhibits azoreductase activity. Catalyzes the reductive cleavage of the azo bond in aromatic azo compounds to the corresponding amines. The chain is FMN-dependent NADH:quinone oxidoreductase from Mesomycoplasma hyopneumoniae (strain 232) (Mycoplasma hyopneumoniae).